Here is an 83-residue protein sequence, read N- to C-terminus: Translational regulator CsrA (83 aa).

Belongs to the CsrA/RsmA family. As to quaternary structure, homodimer; the beta-strands of each monomer intercalate to form a hydrophobic core, while the alpha-helices form wings that extend away from the core.

Its subcellular location is the cytoplasm. Its function is as follows. A translational regulator that binds mRNA to regulate translation initiation and/or mRNA stability. Usually binds in the 5'-UTR at or near the Shine-Dalgarno sequence preventing ribosome-binding, thus repressing translation. Its main target seems to be the major flagellin gene, while its function is anatagonized by FliW. The protein is Translational regulator CsrA of Thermotoga petrophila (strain ATCC BAA-488 / DSM 13995 / JCM 10881 / RKU-1).